Consider the following 152-residue polypeptide: MLVINSCRAASRLALRSLNLRSPIATRTFSTGLALKTKDVVNITFVRANGDKIKTSGKVGDSLLDVVVNNNVDLDGFGACEGTLTCSTCHLIFKTSDFEKLPDKPGDEELDMLDLAYELTDTSRLGCQITLSKDMEGLEVHVPSTINDARAA.

The transit peptide at 1–29 directs the protein to the mitochondrion; it reads MLVINSCRAASRLALRSLNLRSPIATRTF. The 106-residue stretch at 41–146 folds into the 2Fe-2S ferredoxin-type domain; the sequence is VNITFVRANG…GLEVHVPSTI (106 aa). [2Fe-2S] cluster is bound by residues C80, C86, C89, and C127.

Belongs to the adrenodoxin/putidaredoxin family. [2Fe-2S] cluster is required as a cofactor.

It localises to the mitochondrion. In terms of biological role, required for ecdysteroidogenesis in the prothoracic gland which is necessary for larval to pupal transition. This Drosophila melanogaster (Fruit fly) protein is Adrenodoxin-like protein 2, mitochondrial.